Consider the following 282-residue polypeptide: Pantothenate synthetase (282 aa).

Position 31–38 (31–38 (MGALHDGH)) interacts with ATP. Catalysis depends on histidine 38, which acts as the Proton donor. Residue glutamine 62 coordinates (R)-pantoate. Glutamine 62 is a binding site for beta-alanine. 148-151 (GKKD) is a binding site for ATP. Glutamine 154 serves as a coordination point for (R)-pantoate. ATP contacts are provided by residues valine 177 and 185-188 (KSSR).

It belongs to the pantothenate synthetase family. As to quaternary structure, homodimer.

The protein resides in the cytoplasm. The catalysed reaction is (R)-pantoate + beta-alanine + ATP = (R)-pantothenate + AMP + diphosphate + H(+). Its pathway is cofactor biosynthesis; (R)-pantothenate biosynthesis; (R)-pantothenate from (R)-pantoate and beta-alanine: step 1/1. Functionally, catalyzes the condensation of pantoate with beta-alanine in an ATP-dependent reaction via a pantoyl-adenylate intermediate. This Staphylococcus saprophyticus subsp. saprophyticus (strain ATCC 15305 / DSM 20229 / NCIMB 8711 / NCTC 7292 / S-41) protein is Pantothenate synthetase.